Consider the following 95-residue polypeptide: MSVTRDDVRHVAQLARLDFSEEEEARMAEELSEILGYVEKLDELDTAGVPPMSHVLDVTNVFRSDEIEERIDRGQALEPAPDADNEHFLVPQVVE.

The tract at residues 74 to 95 (GQALEPAPDADNEHFLVPQVVE) is disordered.

Belongs to the GatC family. In terms of assembly, heterotrimer of A, B and C subunits.

It catalyses the reaction L-glutamyl-tRNA(Gln) + L-glutamine + ATP + H2O = L-glutaminyl-tRNA(Gln) + L-glutamate + ADP + phosphate + H(+). The catalysed reaction is L-aspartyl-tRNA(Asn) + L-glutamine + ATP + H2O = L-asparaginyl-tRNA(Asn) + L-glutamate + ADP + phosphate + 2 H(+). Allows the formation of correctly charged Asn-tRNA(Asn) or Gln-tRNA(Gln) through the transamidation of misacylated Asp-tRNA(Asn) or Glu-tRNA(Gln) in organisms which lack either or both of asparaginyl-tRNA or glutaminyl-tRNA synthetases. The reaction takes place in the presence of glutamine and ATP through an activated phospho-Asp-tRNA(Asn) or phospho-Glu-tRNA(Gln). This chain is Aspartyl/glutamyl-tRNA(Asn/Gln) amidotransferase subunit C, found in Salinibacter ruber (strain DSM 13855 / M31).